Here is a 94-residue protein sequence, read N- to C-terminus: Small ribosomal subunit protein uS17 (94 aa).

Positions 1-22 (MASSSTEGQAAARGRKKSWTGK) are disordered.

The protein belongs to the universal ribosomal protein uS17 family. Part of the 30S ribosomal subunit.

Its function is as follows. One of the primary rRNA binding proteins, it binds specifically to the 5'-end of 16S ribosomal RNA. The protein is Small ribosomal subunit protein uS17 of Chlorobium luteolum (strain DSM 273 / BCRC 81028 / 2530) (Pelodictyon luteolum).